Here is a 329-residue protein sequence, read N- to C-terminus: DNA-directed RNA polymerase subunit alpha (329 aa).

The tract at residues 1–233 (MVREKVKVST…NLFIPFLHVE (233 aa)) is alpha N-terminal domain (alpha-NTD). The tract at residues 266–329 (TKELAFQYIF…KKILDILEKK (64 aa)) is alpha C-terminal domain (alpha-CTD).

It belongs to the RNA polymerase alpha chain family. In terms of assembly, in plastids the minimal PEP RNA polymerase catalytic core is composed of four subunits: alpha, beta, beta', and beta''. When a (nuclear-encoded) sigma factor is associated with the core the holoenzyme is formed, which can initiate transcription.

Its subcellular location is the plastid. It is found in the chloroplast. The catalysed reaction is RNA(n) + a ribonucleoside 5'-triphosphate = RNA(n+1) + diphosphate. Functionally, DNA-dependent RNA polymerase catalyzes the transcription of DNA into RNA using the four ribonucleoside triphosphates as substrates. This chain is DNA-directed RNA polymerase subunit alpha, found in Arabidopsis thaliana (Mouse-ear cress).